A 298-amino-acid polypeptide reads, in one-letter code: Nucleoid occlusion protein (298 aa).

Positions 152-171 form a DNA-binding region, H-T-H motif; the sequence is EALAQRLGKGQSTVANKLRL.

Belongs to the ParB family.

The protein resides in the cytoplasm. Its subcellular location is the nucleoid. Functionally, effects nucleoid occlusion by binding relatively nonspecifically to DNA and preventing the assembly of the division machinery in the vicinity of the nucleoid, especially under conditions that disturb the cell cycle. It helps to coordinate cell division and chromosome segregation by preventing the formation of the Z ring through the nucleoid, which would cause chromosome breakage. This chain is Nucleoid occlusion protein, found in Lysinibacillus sphaericus (strain C3-41).